The chain runs to 644 residues: Chaperone protein HtpG (644 aa).

The segment at 1-352 (MNARVEQLEF…AQDMSLNVSR (352 aa)) is a; substrate-binding. The b stretch occupies residues 353–566 (EILQQDRQIK…AFGITPALAR (214 aa)). The tract at residues 567 to 644 (LYRASGQDIP…ILADRLARTL (78 aa)) is c.

The protein belongs to the heat shock protein 90 family. In terms of assembly, homodimer.

Its subcellular location is the cytoplasm. In terms of biological role, molecular chaperone. Has ATPase activity. In Mycobacterium avium (strain 104), this protein is Chaperone protein HtpG.